Reading from the N-terminus, the 250-residue chain is 5'-nucleotidase SurE (250 aa).

A divalent metal cation-binding residues include aspartate 8, aspartate 9, serine 40, and asparagine 94.

The protein belongs to the SurE nucleotidase family. The cofactor is a divalent metal cation.

It localises to the cytoplasm. The enzyme catalyses a ribonucleoside 5'-phosphate + H2O = a ribonucleoside + phosphate. Its function is as follows. Nucleotidase that shows phosphatase activity on nucleoside 5'-monophosphates. The chain is 5'-nucleotidase SurE from Wolbachia pipientis wMel.